The following is a 124-amino-acid chain: Large ribosomal subunit protein uL18 (124 aa).

The protein belongs to the universal ribosomal protein uL18 family. Part of the 50S ribosomal subunit; part of the 5S rRNA/L5/L18/L25 subcomplex. Contacts the 5S and 23S rRNAs.

In terms of biological role, this is one of the proteins that bind and probably mediate the attachment of the 5S RNA into the large ribosomal subunit, where it forms part of the central protuberance. This Aquifex aeolicus (strain VF5) protein is Large ribosomal subunit protein uL18.